A 501-amino-acid polypeptide reads, in one-letter code: ATP synthase subunit alpha, chloroplastic (501 aa).

170–177 (GDRQTGKT) lines the ATP pocket.

Belongs to the ATPase alpha/beta chains family. In terms of assembly, F-type ATPases have 2 components, CF(1) - the catalytic core - and CF(0) - the membrane proton channel. CF(1) has five subunits: alpha(3), beta(3), gamma(1), delta(1), epsilon(1). CF(0) has four main subunits: a, b, b' and c.

The protein localises to the plastid. The protein resides in the chloroplast thylakoid membrane. The enzyme catalyses ATP + H2O + 4 H(+)(in) = ADP + phosphate + 5 H(+)(out). Functionally, produces ATP from ADP in the presence of a proton gradient across the membrane. The alpha chain is a regulatory subunit. This chain is ATP synthase subunit alpha, chloroplastic, found in Nephroselmis olivacea (Green alga).